A 380-amino-acid chain; its full sequence is Transmembrane protein 229A (380 aa).

Residues 1-40 (MAGSDVDSEGPARRGGAARRPGAPGGPGSEAAAGCPEPLS) form a disordered region. 2 consecutive transmembrane segments (helical) span residues 51-71 (LPAWMRLYFYGMHGITLDVLV) and 117-137 (AFVFNFLLYPSAHVGLQTLAG). Residues 188–236 (RQQQQQQQQQQQQRRGALPVPPGARVPTAAGARRRRPRGPRGAGGAPSQ) form a disordered region. Residues 190–202 (QQQQQQQQQQQRR) are compositionally biased toward low complexity. The next 4 helical transmembrane spans lie at 244 to 264 (FLFFGMHGFLDEIFFTFFFNV), 278 to 298 (LWSFFMYGSCSFVVEKLYFHL), 310 to 330 (VPIYVIFIYVWELSWGLGLRT), and 343 to 363 (LNFMGLITLMYLPGWIFLSVY).

This sequence belongs to the TMEM229 family.

It is found in the membrane. In Homo sapiens (Human), this protein is Transmembrane protein 229A (TMEM229A).